Consider the following 432-residue polypeptide: Adenylosuccinate synthetase (432 aa).

GTP contacts are provided by residues 13 to 19 (GDEGKGK) and 41 to 43 (GHT). Asp14 acts as the Proton acceptor in catalysis. Mg(2+)-binding residues include Asp14 and Gly41. Residues 14 to 17 (DEGK), 39 to 42 (NAGH), Thr130, Arg144, Gln225, Thr240, and Arg304 contribute to the IMP site. Residue His42 is the Proton donor of the active site. 300–306 (ATTGRRR) is a substrate binding site. Residues Arg306, 332 to 334 (KLD), and 415 to 417 (STG) contribute to the GTP site.

It belongs to the adenylosuccinate synthetase family. As to quaternary structure, homodimer. Mg(2+) serves as cofactor.

The protein localises to the cytoplasm. The catalysed reaction is IMP + L-aspartate + GTP = N(6)-(1,2-dicarboxyethyl)-AMP + GDP + phosphate + 2 H(+). It functions in the pathway purine metabolism; AMP biosynthesis via de novo pathway; AMP from IMP: step 1/2. Its function is as follows. Plays an important role in the de novo pathway of purine nucleotide biosynthesis. Catalyzes the first committed step in the biosynthesis of AMP from IMP. In Erwinia tasmaniensis (strain DSM 17950 / CFBP 7177 / CIP 109463 / NCPPB 4357 / Et1/99), this protein is Adenylosuccinate synthetase.